A 507-amino-acid chain; its full sequence is Maturase K (507 aa).

This sequence belongs to the intron maturase 2 family. MatK subfamily.

The protein localises to the plastid. It is found in the chloroplast. In terms of biological role, usually encoded in the trnK tRNA gene intron. Probably assists in splicing its own and other chloroplast group II introns. This chain is Maturase K, found in Euryale ferox (Gorgon plant).